The primary structure comprises 323 residues: tRNA U34 carboxymethyltransferase (323 aa).

Carboxy-S-adenosyl-L-methionine contacts are provided by residues Lys-91, Trp-105, Lys-110, Gly-130, 152 to 154, 181 to 182, Met-196, Tyr-200, and Arg-315; these read DPT and IE.

Belongs to the class I-like SAM-binding methyltransferase superfamily. CmoB family. Homotetramer.

It carries out the reaction carboxy-S-adenosyl-L-methionine + 5-hydroxyuridine(34) in tRNA = 5-carboxymethoxyuridine(34) in tRNA + S-adenosyl-L-homocysteine + H(+). Its function is as follows. Catalyzes carboxymethyl transfer from carboxy-S-adenosyl-L-methionine (Cx-SAM) to 5-hydroxyuridine (ho5U) to form 5-carboxymethoxyuridine (cmo5U) at position 34 in tRNAs. The sequence is that of tRNA U34 carboxymethyltransferase from Salmonella arizonae (strain ATCC BAA-731 / CDC346-86 / RSK2980).